The sequence spans 286 residues: Meteorin-like protein (286 aa).

Residues Met1 to Ser20 form the signal peptide. 5 disulfides stabilise this stretch: Cys28/Cys51, Cys84/Cys120, Cys165/Cys235, Cys168/Cys259, and Cys178/Cys281. N-linked (GlcNAc...) asparagine glycosylation is present at Asn203.

Belongs to the meteorin family.

It localises to the secreted. Its function is as follows. Hormone induced following exercise or cold exposure that promotes energy expenditure. Induced either in the skeletal muscle after exercise or in adipose tissue following cold exposure and is present in the circulation. Able to stimulate energy expenditure associated with the browning of the white fat depots and improves glucose tolerance. In Xenopus laevis (African clawed frog), this protein is Meteorin-like protein (metrnl).